Consider the following 61-residue polypeptide: Defensin BmKDfsin2 (61 aa).

Positions 1–24 (METIVLLFLLALVFCTLEMGMVEA) are cleaved as a signal peptide. 3 disulfides stabilise this stretch: Cys28/Cys49, Cys35/Cys57, and Cys39/Cys59.

The protein belongs to the invertebrate defensin family. Type 2 subfamily. As to expression, highly expressed in non-venom gland (hemolymph) and moderately expressed in venom gland.

It is found in the secreted. Antibacterial peptide active against Gram-positive bacteria, but not on Gram-negative bacteria. Also has weak blocking activity on Kv1.1/KCNA1, Kv1.2/KCNA2, Kv1.3/KCNA3, KCa3.1/KCNN4/IK, KCa2.3/KCNN3/SK3 and Kv11.1/KCNH2/ERG1 channels (tested at 1 uM). It inhibits potassium channel current by interacting with the pore region. This Olivierus martensii (Manchurian scorpion) protein is Defensin BmKDfsin2.